The chain runs to 172 residues: Ribosome maturation factor RimM (172 aa).

The 74-residue stretch at 97-170 folds into the PRC barrel domain; sequence DDEYYYDEII…LITIDVLEGL (74 aa).

Belongs to the RimM family. Binds ribosomal protein uS19.

It is found in the cytoplasm. Functionally, an accessory protein needed during the final step in the assembly of 30S ribosomal subunit, possibly for assembly of the head region. Essential for efficient processing of 16S rRNA. May be needed both before and after RbfA during the maturation of 16S rRNA. It has affinity for free ribosomal 30S subunits but not for 70S ribosomes. In Leuconostoc citreum (strain KM20), this protein is Ribosome maturation factor RimM.